The primary structure comprises 346 residues: Biotin synthase (346 aa).

The Radical SAM core domain maps to 38-256 (QQVQVSTLLS…IAVARIMMPT (219 aa)). [4Fe-4S] cluster-binding residues include Cys53, Cys57, and Cys60. Residues Cys97, Cys128, Cys188, and Arg260 each coordinate [2Fe-2S] cluster.

The protein belongs to the radical SAM superfamily. Biotin synthase family. Homodimer. Requires [4Fe-4S] cluster as cofactor. The cofactor is [2Fe-2S] cluster.

It carries out the reaction (4R,5S)-dethiobiotin + (sulfur carrier)-SH + 2 reduced [2Fe-2S]-[ferredoxin] + 2 S-adenosyl-L-methionine = (sulfur carrier)-H + biotin + 2 5'-deoxyadenosine + 2 L-methionine + 2 oxidized [2Fe-2S]-[ferredoxin]. Its pathway is cofactor biosynthesis; biotin biosynthesis; biotin from 7,8-diaminononanoate: step 2/2. Catalyzes the conversion of dethiobiotin (DTB) to biotin by the insertion of a sulfur atom into dethiobiotin via a radical-based mechanism. This Salmonella newport (strain SL254) protein is Biotin synthase.